A 334-amino-acid polypeptide reads, in one-letter code: Glucan endo-1,3-beta-glucosidase GII (334 aa).

The N-terminal stretch at 1-28 (MARKDVASMFAAALFIGAFAAVPTSVQS) is a signal peptide. Glu122 acts as the Proton donor in catalysis. The active-site Nucleophile is the Glu259.

It belongs to the glycosyl hydrolase 17 family.

It catalyses the reaction Hydrolysis of (1-&gt;3)-beta-D-glucosidic linkages in (1-&gt;3)-beta-D-glucans.. May provide a degree of protection against microbial invasion of germinated barley grain through its ability to degrade fungal cell wall polysaccharides. Hydrolyzes laminarin in vitro. This Hordeum vulgare (Barley) protein is Glucan endo-1,3-beta-glucosidase GII.